The chain runs to 468 residues: 6-phospho-beta-galactosidase (468 aa).

5 residues coordinate D-galactose 6-phosphate: Q19, H116, N159, E160, and N297. E160 functions as the Proton donor in the catalytic mechanism. Residue E375 is the Nucleophile of the active site. The D-galactose 6-phosphate site is built by S428, W429, K435, and Y437.

Belongs to the glycosyl hydrolase 1 family.

The catalysed reaction is a 6-phospho-beta-D-galactoside + H2O = D-galactose 6-phosphate + an alcohol. It participates in carbohydrate metabolism; lactose degradation; D-galactose 6-phosphate and beta-D-glucose from lactose 6-phosphate: step 1/1. The polypeptide is 6-phospho-beta-galactosidase (Streptococcus pneumoniae (strain JJA)).